The chain runs to 79 residues: Succinate dehydrogenase assembly factor 1, mitochondrial (79 aa).

The protein belongs to the complex I LYR family. SDHAF1 subfamily. Interacts with sdh2 within an sdh1-sdh2 subcomplex.

It is found in the mitochondrion matrix. Functionally, plays an essential role in the assembly of succinate dehydrogenase (SDH), an enzyme complex (also referred to as respiratory complex II) that is a component of both the tricarboxylic acid (TCA) cycle and the mitochondrial electron transport chain, and which couples the oxidation of succinate to fumarate with the reduction of ubiquinone (coenzyme Q) to ubiquinol. Promotes maturation of the iron-sulfur protein subunit sdh2 of the SDH catalytic dimer, protecting it from the deleterious effects of oxidants. May act together with SDHAF3. This is Succinate dehydrogenase assembly factor 1, mitochondrial from Schizosaccharomyces pombe (strain 972 / ATCC 24843) (Fission yeast).